The following is a 205-amino-acid chain: MSKRESSKYKIDRRMGENIWGRPKSPVNRREYGPGQHGQRRKSKLSDFGVQLRAKQKLKGYYGDIREKQFRAIFAEASRRKGDTPENLVGLLESRLDAIVYRAKFVPTVFAARQFVNHGHVKVNGVRVNIGSYRCKPGDVIEVKEKSKQLVTVLEAVQLAERDVPDYIEADHNKMVATFVRVPALSDVPYPVVMEPHLVVEFYSR.

A compositionally biased stretch (basic and acidic residues) spans 1–16 (MSKRESSKYKIDRRMG). A disordered region spans residues 1–46 (MSKRESSKYKIDRRMGENIWGRPKSPVNRREYGPGQHGQRRKSKLS). Residues 94–157 (SRLDAIVYRA…KQLVTVLEAV (64 aa)) enclose the S4 RNA-binding domain.

The protein belongs to the universal ribosomal protein uS4 family. Part of the 30S ribosomal subunit. Contacts protein S5. The interaction surface between S4 and S5 is involved in control of translational fidelity.

One of the primary rRNA binding proteins, it binds directly to 16S rRNA where it nucleates assembly of the body of the 30S subunit. In terms of biological role, with S5 and S12 plays an important role in translational accuracy. The protein is Small ribosomal subunit protein uS4 of Rhizobium meliloti (strain 1021) (Ensifer meliloti).